The following is a 360-amino-acid chain: Magnesium-protoporphyrin IX monomethyl ester [oxidative] cyclase (360 aa).

The disordered stretch occupies residues 1 to 21 (MPPTAVTEATAVPGSNVTTKD).

Belongs to the AcsF family. Requires Fe cation as cofactor.

It catalyses the reaction Mg-protoporphyrin IX 13-monomethyl ester + 3 NADPH + 3 O2 + 2 H(+) = 3,8-divinyl protochlorophyllide a + 3 NADP(+) + 5 H2O. It functions in the pathway porphyrin-containing compound metabolism; chlorophyll biosynthesis (light-independent). Functionally, catalyzes the formation of the isocyclic ring in chlorophyll biosynthesis. Mediates the cyclase reaction, which results in the formation of divinylprotochlorophyllide (Pchlide) characteristic of all chlorophylls from magnesium-protoporphyrin IX 13-monomethyl ester (MgPMME). This chain is Magnesium-protoporphyrin IX monomethyl ester [oxidative] cyclase, found in Synechococcus sp. (strain CC9311).